The sequence spans 505 residues: Histidine ammonia-lyase (505 aa).

Residues 141-143 (ASG) constitute a cross-link (5-imidazolinone (Ala-Gly)). Serine 142 bears the 2,3-didehydroalanine (Ser) mark.

This sequence belongs to the PAL/histidase family. In terms of processing, contains an active site 4-methylidene-imidazol-5-one (MIO), which is formed autocatalytically by cyclization and dehydration of residues Ala-Ser-Gly.

It localises to the cytoplasm. It catalyses the reaction L-histidine = trans-urocanate + NH4(+). It functions in the pathway amino-acid degradation; L-histidine degradation into L-glutamate; N-formimidoyl-L-glutamate from L-histidine: step 1/3. This is Histidine ammonia-lyase from Bacillus anthracis.